The chain runs to 258 residues: Imidazole glycerol phosphate synthase subunit HisF (258 aa).

Catalysis depends on residues Asp11 and Asp130.

It belongs to the HisA/HisF family. In terms of assembly, heterodimer of HisH and HisF.

It localises to the cytoplasm. The catalysed reaction is 5-[(5-phospho-1-deoxy-D-ribulos-1-ylimino)methylamino]-1-(5-phospho-beta-D-ribosyl)imidazole-4-carboxamide + L-glutamine = D-erythro-1-(imidazol-4-yl)glycerol 3-phosphate + 5-amino-1-(5-phospho-beta-D-ribosyl)imidazole-4-carboxamide + L-glutamate + H(+). It functions in the pathway amino-acid biosynthesis; L-histidine biosynthesis; L-histidine from 5-phospho-alpha-D-ribose 1-diphosphate: step 5/9. In terms of biological role, IGPS catalyzes the conversion of PRFAR and glutamine to IGP, AICAR and glutamate. The HisF subunit catalyzes the cyclization activity that produces IGP and AICAR from PRFAR using the ammonia provided by the HisH subunit. The polypeptide is Imidazole glycerol phosphate synthase subunit HisF (Salmonella arizonae (strain ATCC BAA-731 / CDC346-86 / RSK2980)).